The chain runs to 72 residues: Small proline-rich protein 2A (72 aa).

Residues 1-11 (MSYQQQQCKQP) are compositionally biased toward low complexity. The tract at residues 1–20 (MSYQQQQCKQPCQPPPVCPT) is disordered. Tandem repeats lie at residues 21–29 (PKCPEPCPP), 30–38 (PKCPEPCPP), and 39–47 (PKCPQPCPP). Positions 21–47 (PKCPEPCPPPKCPEPCPPPKCPQPCPP) are 3 X 9 AA tandem repeats of P-K-C-P-[EQ]-P-C-P-P. The segment at 42 to 72 (PQPCPPQQCQQKYPPVTPSPPCQSKYPPKSK) is disordered.

The protein belongs to the cornifin (SPRR) family. Post-translationally, forms five pairs of intrachain disulfide bonds. As to expression, expressed in intestine; selectively expressed in goblet cells.

It is found in the secreted. The protein localises to the extracellular space. The protein resides in the cytoplasmic vesicle. It localises to the secretory vesicle. In terms of biological role, gut bactericidal protein that selectively kills Gram-positive bacteria by binding to negatively charged lipids on bacterial membranes, leading to bacterial membrane permeabilization and disruption. Specifically binds lipids bearing negatively charged headgroups, such as phosphatidic acid, phosphatidylserine (PS), cardiolipin (CL), and phosphatidylinositol phosphates, but not to zwitterionic or neutral lipids. Induced by type-2 cytokines in response to helminth infection and is required to protect against helminth-induced bacterial invasion of intestinal tissue. May also be involved in the development of the cornified envelope of squamous epithelia; however, additional evidences are required to confirm this result in vivo. This is Small proline-rich protein 2A from Homo sapiens (Human).